Here is a 446-residue protein sequence, read N- to C-terminus: Transcriptional adapter 2-alpha (446 aa).

The ZZ-type zinc-finger motif lies at 12 to 69; the sequence is FDKPPCRGCSSYLTEPYVKCAECGPPPFLLCLQCFTRGFEYKKHQSDHTYEIMTSDFP. Residues C17, C20, C31, C34, C42, C45, H55, and H59 each contribute to the Zn(2+) site. Residues 70 to 122 enclose the SANT domain; it reads VLDPNWTAQEEMALLEAVMDCGFGNWQDVANQMCTKSKEECEKHYMKHFINNP. Residues 345–375 are disordered; the sequence is DIDSGPTPAAPIPSNSGRRSAPPLNLTGLPG. Positions 359–446 constitute an SWIRM domain; the sequence is NSGRRSAPPL…LIREGYITKA (88 aa). Residues 429–438 mediate DNA binding; it reads KTRKIYDFLI.

Its subcellular location is the nucleus. It localises to the chromosome. Component of some complex with histone acetyltransferase activity. Required for the function of some acidic activation domains, which activate transcription from a distant site. Binds double-stranded DNA. Binds dinucleosomes, probably at the linker region between neighboring nucleosomes. Plays a role in chromatin remodeling. This chain is Transcriptional adapter 2-alpha (TADA2A), found in Gallus gallus (Chicken).